The sequence spans 213 residues: Orotate phosphoribosyltransferase (213 aa).

Lysine 26 serves as a coordination point for 5-phospho-alpha-D-ribose 1-diphosphate. Orotate is bound at residue 34-35 (FF). 5-phospho-alpha-D-ribose 1-diphosphate-binding positions include 72–73 (YK), arginine 98, lysine 99, lysine 102, and 123–131 (DDVISAGTS). 2 residues coordinate orotate: serine 127 and arginine 155.

The protein belongs to the purine/pyrimidine phosphoribosyltransferase family. PyrE subfamily. As to quaternary structure, homodimer. Requires Mg(2+) as cofactor.

It catalyses the reaction orotidine 5'-phosphate + diphosphate = orotate + 5-phospho-alpha-D-ribose 1-diphosphate. It functions in the pathway pyrimidine metabolism; UMP biosynthesis via de novo pathway; UMP from orotate: step 1/2. Catalyzes the transfer of a ribosyl phosphate group from 5-phosphoribose 1-diphosphate to orotate, leading to the formation of orotidine monophosphate (OMP). The sequence is that of Orotate phosphoribosyltransferase from Neisseria gonorrhoeae (strain ATCC 700825 / FA 1090).